Reading from the N-terminus, the 809-residue chain is LPS-assembly protein LptD (809 aa).

The N-terminal stretch at 1 to 22 (MRRALRLLPLPLSIAICLPAMA) is a signal peptide.

This sequence belongs to the LptD family. In terms of assembly, component of the lipopolysaccharide transport and assembly complex. Interacts with LptE and LptA.

The protein localises to the cell outer membrane. Functionally, together with LptE, is involved in the assembly of lipopolysaccharide (LPS) at the surface of the outer membrane. This is LPS-assembly protein LptD from Xanthomonas campestris pv. campestris (strain 8004).